Here is a 237-residue protein sequence, read N- to C-terminus: 2,3-bisphosphoglycerate-dependent phosphoglycerate mutase (237 aa).

Substrate-binding positions include 10 to 17, 23 to 24, R62, 89 to 92, K100, 116 to 117, and 185 to 186; these read RHGESKWN, TG, ERHY, RR, and GN. The Tele-phosphohistidine intermediate role is filled by H11. E89 (proton donor/acceptor) is an active-site residue.

It belongs to the phosphoglycerate mutase family. BPG-dependent PGAM subfamily. As to quaternary structure, homodimer.

It carries out the reaction (2R)-2-phosphoglycerate = (2R)-3-phosphoglycerate. It functions in the pathway carbohydrate degradation; glycolysis; pyruvate from D-glyceraldehyde 3-phosphate: step 3/5. In terms of biological role, catalyzes the interconversion of 2-phosphoglycerate and 3-phosphoglycerate. The sequence is that of 2,3-bisphosphoglycerate-dependent phosphoglycerate mutase from Baumannia cicadellinicola subsp. Homalodisca coagulata.